The primary structure comprises 114 residues: Large ribosomal subunit protein uL18 (114 aa).

This sequence belongs to the universal ribosomal protein uL18 family. In terms of assembly, part of the 50S ribosomal subunit; part of the 5S rRNA/L5/L18/L25 subcomplex. Contacts the 5S and 23S rRNAs.

Functionally, this is one of the proteins that bind and probably mediate the attachment of the 5S RNA into the large ribosomal subunit, where it forms part of the central protuberance. In Parabacteroides distasonis (strain ATCC 8503 / DSM 20701 / CIP 104284 / JCM 5825 / NCTC 11152), this protein is Large ribosomal subunit protein uL18.